Reading from the N-terminus, the 161-residue chain is Troponin C, slow skeletal and cardiac muscles (161 aa).

N-acetylmethionine is present on Met-1. 4 consecutive EF-hand domains span residues 16–51 (QKNE…LGQN), 52–87 (PTPE…CMKD), 92–127 (KTEE…TGET), and 128–161 (ITED…KGVE). Residues Asp-65, Asp-67, Ser-69, Thr-71, Asp-105, Asn-107, Asp-109, Tyr-111, Glu-116, Asn-143, Asp-145, Arg-147, and Glu-152 each contribute to the Ca(2+) site.

This sequence belongs to the troponin C family.

In terms of biological role, troponin is the central regulatory protein of striated muscle contraction. Tn consists of three components: Tn-I which is the inhibitor of actomyosin ATPase, Tn-T which contains the binding site for tropomyosin and Tn-C. The binding of calcium to Tn-C abolishes the inhibitory action of Tn on actin filaments. This is Troponin C, slow skeletal and cardiac muscles (TNNC1) from Coturnix japonica (Japanese quail).